Consider the following 93-residue polypeptide: UPF0147 protein MM_1385 (93 aa).

This sequence belongs to the UPF0147 family.

This is UPF0147 protein MM_1385 from Methanosarcina mazei (strain ATCC BAA-159 / DSM 3647 / Goe1 / Go1 / JCM 11833 / OCM 88) (Methanosarcina frisia).